We begin with the raw amino-acid sequence, 571 residues long: Potassium-transporting ATPase potassium-binding subunit (571 aa).

Helical transmembrane passes span 3-23, 64-84, 135-155, 179-199, 254-274, 284-304, 330-350, 357-376, 421-441, 488-508, and 527-547; these read LIGW…VKPL, LGYG…LYAI, LGLT…AVAL, LYVL…QGMP, LANL…TNVF, GWAI…VTYA, FGIV…CGAV, FTAL…EIIV, MLAI…ATVL, LALG…AIAG, and GGLF…LTFF.

It belongs to the KdpA family. The system is composed of three essential subunits: KdpA, KdpB and KdpC.

It localises to the cell inner membrane. Part of the high-affinity ATP-driven potassium transport (or Kdp) system, which catalyzes the hydrolysis of ATP coupled with the electrogenic transport of potassium into the cytoplasm. This subunit binds the periplasmic potassium ions and delivers the ions to the membrane domain of KdpB through an intramembrane tunnel. This Methylorubrum populi (strain ATCC BAA-705 / NCIMB 13946 / BJ001) (Methylobacterium populi) protein is Potassium-transporting ATPase potassium-binding subunit.